The sequence spans 1273 residues: Receptor-type tyrosine-protein phosphatase C (1273 aa).

An N-terminal signal peptide occupies residues 1–23 (MYLWLKLLAFSLALLGPEVFVTG). The Extracellular segment spans residues 24–546 (QGTTDDGLDT…KPQSTSYNSK (523 aa)). The segment at 45-192 (LPARTTEFTP…TEIATPQTKP (148 aa)) is disordered. Composition is skewed to polar residues over residues 50 to 77 (TEFTPPSISERGNGSSETTYLPGFSSTL), 84 to 111 (QPDSQTPSARGADTQTLSSQADLTTLTA), and 141 to 192 (RNST…QTKP). Asparagine 62 carries N-linked (GlcNAc...) asparagine glycosylation. 15 N-linked (GlcNAc...) asparagine glycosylation sites follow: asparagine 142, asparagine 153, asparagine 164, asparagine 178, asparagine 200, asparagine 245, asparagine 250, asparagine 271, asparagine 282, asparagine 327, asparagine 333, asparagine 371, asparagine 374, asparagine 471, and asparagine 502. Fibronectin type-III domains lie at 361-452 (PEML…TKAA) and 453-545 (RPGK…SYNS). A helical membrane pass occupies residues 547 to 567 (ALIIFLVFLIIVTSIALLVVL). Topologically, residues 568 to 1273 (YKIYDLRKKR…PMSPALTPSS (706 aa)) are cytoplasmic. 2 consecutive Tyrosine-protein phosphatase domains span residues 622 to 881 (FLAE…LVEY) and 913 to 1196 (LEAE…MASI). Phosphotyrosine is present on tyrosine 652. Residues aspartate 790, 822 to 828 (CSAGVGR), and glutamine 866 contribute to the substrate site. Residue cysteine 822 is the Phosphocysteine intermediate of the active site. Residues serine 944, serine 963, serine 966, serine 970, serine 973, serine 974, and serine 978 each carry the phosphoserine modification. The interval 960-984 (LEMSKESEAESDESSDEDSDSEETS) is disordered. Residues 968-981 (AESDESSDEDSDSE) show a composition bias toward acidic residues. Cysteine 1137 functions as the Phosphocysteine intermediate in the catalytic mechanism. Phosphoserine occurs at positions 1209 and 1266. Residues 1219–1273 (VDGAKQDANCVQPADPLNKAQEDSKEVGASEPASGSEEPEHSANGPMSPALTPSS) form a disordered region.

This sequence belongs to the protein-tyrosine phosphatase family. Receptor class 1/6 subfamily. Interacts with SKAP1. Interacts with DPP4; the interaction is enhanced in an interleukin-12-dependent manner in activated lymphocytes. Binds GANAB and PRKCSH. Interacts with CD53; this interaction stabilizes PTPRC on the membrane and is required for optimal phosphatase activity. Interacts with CLEC10A. Heavily N- and O-glycosylated. In terms of processing, the cytoplasmic domain contains potential phosphorylation sites. In terms of tissue distribution, isoform 1 and isoform 2 are found in thymocyte and lymph node. Isoform 4 and isoform 3 are found in the lymph nod.

The protein localises to the cell membrane. The protein resides in the membrane raft. It is found in the synapse. It carries out the reaction O-phospho-L-tyrosyl-[protein] + H2O = L-tyrosyl-[protein] + phosphate. Functionally, protein tyrosine-protein phosphatase required for T-cell activation through the antigen receptor. Acts as a positive regulator of T-cell coactivation upon binding to DPP4. The first PTPase domain has enzymatic activity, while the second one seems to affect the substrate specificity of the first one. Upon T-cell activation, recruits and dephosphorylates SKAP1 and FYN. Dephosphorylates LYN, and thereby modulates LYN activity. Interacts with CLEC10A at antigen presenting cell-T cell contact; CLEC10A on immature dendritic cells recognizes Tn antigen-carrying PTPRC/CD45 receptor on effector T cells and modulates T cell activation threshold to limit autoreactivity. The polypeptide is Receptor-type tyrosine-protein phosphatase C (Ptprc) (Rattus norvegicus (Rat)).